A 234-amino-acid chain; its full sequence is Ribosomal RNA small subunit methyltransferase G (234 aa).

The S-adenosyl-L-methionine site is built by Gly85, Phe90, and Arg155.

This sequence belongs to the methyltransferase superfamily. RNA methyltransferase RsmG family.

It is found in the cytoplasm. It catalyses the reaction guanosine(527) in 16S rRNA + S-adenosyl-L-methionine = N(7)-methylguanosine(527) in 16S rRNA + S-adenosyl-L-homocysteine. Its function is as follows. Specifically methylates the N7 position of guanine in position 527 of 16S rRNA. This Rhodopseudomonas palustris (strain BisB18) protein is Ribosomal RNA small subunit methyltransferase G.